The chain runs to 165 residues: uncharacterized protein (165 aa).

Residues 28–97 (EASAPSGNPP…QLSQSLEVPT (70 aa)) form a disordered region. Residues 34-47 (GNPPPPPPPPPPPI) are compositionally biased toward pro residues. 2 stretches are compositionally biased toward polar residues: residues 54–66 (KSLN…QLDN) and 73–94 (AQHT…QSLE).

This is an uncharacterized protein from Rickettsia prowazekii (strain Madrid E).